The sequence spans 457 residues: UDP-N-acetylmuramoylalanine--D-glutamate ligase (457 aa).

126 to 132 is a binding site for ATP; sequence GTAGKGS.

The protein belongs to the MurCDEF family.

It localises to the cytoplasm. It carries out the reaction UDP-N-acetyl-alpha-D-muramoyl-L-alanine + D-glutamate + ATP = UDP-N-acetyl-alpha-D-muramoyl-L-alanyl-D-glutamate + ADP + phosphate + H(+). It functions in the pathway cell wall biogenesis; peptidoglycan biosynthesis. In terms of biological role, cell wall formation. Catalyzes the addition of glutamate to the nucleotide precursor UDP-N-acetylmuramoyl-L-alanine (UMA). This chain is UDP-N-acetylmuramoylalanine--D-glutamate ligase, found in Deinococcus radiodurans (strain ATCC 13939 / DSM 20539 / JCM 16871 / CCUG 27074 / LMG 4051 / NBRC 15346 / NCIMB 9279 / VKM B-1422 / R1).